The following is a 336-amino-acid chain: Ornithine carbamoyltransferase, catabolic (336 aa).

Carbamoyl phosphate contacts are provided by residues 57 to 60 (STRT), Gln-84, Arg-108, and 135 to 138 (HPTQ). L-ornithine-binding positions include Asn-168, Asp-232, and 236 to 237 (SM). Carbamoyl phosphate contacts are provided by residues 274-275 (CL) and Arg-321.

Belongs to the aspartate/ornithine carbamoyltransferase superfamily. OTCase family. In terms of assembly, nonameric or dodecamer (tetramer of trimers).

The protein localises to the cytoplasm. The catalysed reaction is carbamoyl phosphate + L-ornithine = L-citrulline + phosphate + H(+). Its pathway is amino-acid degradation; L-arginine degradation via ADI pathway; carbamoyl phosphate from L-arginine: step 2/2. Inhibited by 2-aminopentanoic acid (norvaline). Activated by phosphate and nucleoside monophosphates such as AMP, GMP, CMP, UMP. Allosterically inhibited by the polyamines such as spermidine and putrescine. Its function is as follows. Involved in the catabolism of arginine. Catalyzes the phosphorolysis of citrulline, the reverse reaction of the biosynthetic one, yielding ornithine and carbamoyl phosphate which serve to generate ATP from ADP. This catabolic OTCase does not carry out the biosynthetic reaction because of a poor affinity and a marked cooperativity for carbamoyl phosphate. The protein is Ornithine carbamoyltransferase, catabolic of Pseudomonas aeruginosa (strain ATCC 15692 / DSM 22644 / CIP 104116 / JCM 14847 / LMG 12228 / 1C / PRS 101 / PAO1).